The following is a 116-amino-acid chain: Tachykinin-3 (116 aa).

The first 20 residues, Met1 to Gly20, serve as a signal peptide directing secretion. The propeptide occupies Ala21–Gln79. Residue Met91 is modified to Methionine amide. Residues Lys93–Lys116 are disordered. The propeptide occupies Asn95 to Lys116.

The protein belongs to the tachykinin family.

It localises to the secreted. In terms of biological role, tachykinins are active peptides which excite neurons, evoke behavioral responses, are potent vasodilators and secretagogues, and contract (directly or indirectly) many smooth muscles. Is a critical central regulator of gonadal function. The protein is Tachykinin-3 (Tac3) of Mus musculus (Mouse).